The primary structure comprises 151 residues: uncharacterized protein (151 aa).

4 consecutive transmembrane segments (helical) span residues 8–28 (GIGSGVSLLILRFFLAWEFFE), 60–80 (WHVAMGSELIFPFLLIFGVLT), 82–102 (FSALSLTILISVAWYSIHADS), and 113–133 (LPLIYVVTLLILITQGAGKLS).

Belongs to the DoxX family.

The protein localises to the cell membrane. This is an uncharacterized protein from Haemophilus influenzae (strain ATCC 51907 / DSM 11121 / KW20 / Rd).